The sequence spans 106 residues: L-rhamnose mutarotase (106 aa).

Residue tyrosine 20 participates in substrate binding. The Proton donor role is filled by histidine 24. Substrate is bound by residues tyrosine 43 and 78–79 (WW).

The protein belongs to the rhamnose mutarotase family. In terms of assembly, homodimer.

Its subcellular location is the cytoplasm. It catalyses the reaction alpha-L-rhamnose = beta-L-rhamnose. It participates in carbohydrate metabolism; L-rhamnose metabolism. Its function is as follows. Involved in the anomeric conversion of L-rhamnose. The sequence is that of L-rhamnose mutarotase from Rhizobium johnstonii (strain DSM 114642 / LMG 32736 / 3841) (Rhizobium leguminosarum bv. viciae).